A 215-amino-acid polypeptide reads, in one-letter code: Pyrrolidone-carboxylate peptidase (215 aa).

Residues E81, C144, and H168 contribute to the active site.

It belongs to the peptidase C15 family. In terms of assembly, homotetramer.

It localises to the cytoplasm. It catalyses the reaction Release of an N-terminal pyroglutamyl group from a polypeptide, the second amino acid generally not being Pro.. In terms of biological role, removes 5-oxoproline from various penultimate amino acid residues except L-proline. This Bacillus licheniformis (strain ATCC 14580 / DSM 13 / JCM 2505 / CCUG 7422 / NBRC 12200 / NCIMB 9375 / NCTC 10341 / NRRL NRS-1264 / Gibson 46) protein is Pyrrolidone-carboxylate peptidase.